A 185-amino-acid polypeptide reads, in one-letter code: Ribosome-recycling factor (185 aa).

Belongs to the RRF family.

It is found in the cytoplasm. In terms of biological role, responsible for the release of ribosomes from messenger RNA at the termination of protein biosynthesis. May increase the efficiency of translation by recycling ribosomes from one round of translation to another. The protein is Ribosome-recycling factor of Haemophilus influenzae (strain ATCC 51907 / DSM 11121 / KW20 / Rd).